Here is a 132-residue protein sequence, read N- to C-terminus: Histone H2A.2 (132 aa).

It belongs to the histone H2A family. The nucleosome is a histone octamer containing two molecules each of H2A, H2B, H3 and H4 assembled in one H3-H4 heterotetramer and two H2A-H2B heterodimers. The octamer wraps approximately 147 bp of DNA.

It is found in the nucleus. Its subcellular location is the chromosome. Its function is as follows. Core component of nucleosome. Nucleosomes wrap and compact DNA into chromatin, limiting DNA accessibility to the cellular machineries which require DNA as a template. Histones thereby play a central role in transcription regulation, DNA repair, DNA replication and chromosomal stability. DNA accessibility is regulated via a complex set of post-translational modifications of histones, also called histone code, and nucleosome remodeling. This Leishmania infantum protein is Histone H2A.2.